The sequence spans 313 residues: Porphobilinogen deaminase (313 aa).

S-(dipyrrolylmethanemethyl)cysteine is present on C242.

The protein belongs to the HMBS family. As to quaternary structure, monomer. Dipyrromethane serves as cofactor.

It carries out the reaction 4 porphobilinogen + H2O = hydroxymethylbilane + 4 NH4(+). It participates in porphyrin-containing compound metabolism; protoporphyrin-IX biosynthesis; coproporphyrinogen-III from 5-aminolevulinate: step 2/4. In terms of biological role, tetrapolymerization of the monopyrrole PBG into the hydroxymethylbilane pre-uroporphyrinogen in several discrete steps. In Pseudomonas syringae pv. syringae (strain B728a), this protein is Porphobilinogen deaminase.